A 432-amino-acid chain; its full sequence is Transcription factor E2F1 (432 aa).

Disordered regions lie at residues 39 to 85 (DVGA…GRPP) and 98 to 126 (YLAG…KSRY). A cyclin A:CDK2 binding region spans residues 65–106 (ATPQAPRPAPSAPRPALGRPPVKRRLDLETDHQYLAGSSGPF). The interaction with BIRC2/c-IAP1 stretch occupies residues 87–189 (KRRLDLETDH…KKSKNHIQWL (103 aa)). A DNA-binding region spans residues 108 to 192 (GRGRHPGKGV…KNHIQWLGSR (85 aa)). K115, K118, and K123 each carry N6-acetyllysine. A leucine-zipper region spans residues 151-172 (LNWAAEVLKVQKRRIYDITNVL). A DEF box motif is present at residues 156–192 (EVLKVQKRRIYDITNVLEGIQLIAKKSKNHIQWLGSR). The residue at position 183 (K183) is an N6-methyllysine; by SETD7. Residues 190–377 (GSRTMVGIGQ…RLSPLVAADS (188 aa)) form a required for interaction with TRIM28 region. The segment at 193-282 (TMVGIGQRLE…AVDSAETFQI (90 aa)) is dimerization. The segment at 297-342 (PEESAEGISPGRTSYQETSGEDRNADSGTAGPPPSPPSTSPTLDPS) is disordered. Residues 363-432 (PMEEDRLSPL…DFGDLTPLDF (70 aa)) are transactivation. Phosphoserine occurs at positions 370 and 398. The RB1 binding stretch occupies residues 404-421 (VDYHFGLEEGEGIRDLFD). T428 is modified (phosphothreonine).

Belongs to the E2F/DP family. In terms of assembly, component of the DRTF1/E2F transcription factor complex. Forms heterodimers with DP family members. The E2F1 complex binds specifically hypophosphorylated RB1, the interaction represses E2F1-driven transcription. During the cell cycle, RB1 becomes phosphorylated in mid-to-late G1 phase, detaches from the DRTF1/E2F complex, rendering E2F transcriptionally active. Interacts with TRRAP, which probably mediates its interaction with histone acetyltransferase complexes, leading to transcription activation. Binds TOPBP1 and EAPP. Interacts with ARID3A. Interacts with TRIM28; the interaction inhibits E2F1 acetylation through recruiting HDAC1 and represses its transcriptional activity. Interaction with KAT2B; the interaction acetylates E2F1 enhancing its DNA-binding and transcriptional activity. Interacts with BIRC2/c-IAP1 (via BIR domains). The complex TFDP1:E2F1 interacts with CEBPA; the interaction prevents CEBPA binding to target genes promoters and represses its transcriptional activity. Interacts with RRP1B. Interacts with HCFC1. Interacts with KMT2E; the interaction is probably indirect and is mediated via HCFC1. Interacts with DCAF5 and L3MBTL3; the interaction requires methylation at Lys-183 and is necessary to target E2F1 for ubiquitination by the CRL4-DCAF5 E3 ubiquitin ligase complex. In terms of processing, phosphorylated by CDK2 and cyclin A-CDK2 in the S-phase. Phosphorylation by CHEK2 stabilizes E2F1 upon DNA damage and regulates its effect on transcription and apoptosis. Phosphorylation at Ser-398 by GSK3B promotes interaction with USP11, leading to its deubiquitination and stabilization. Post-translationally, ubiquitinated via 'Lys-63'-linked ubiquitin, leading to its degradation. Deubiquitinated by USP11 following phosphorylation by GSK3B, promoting its stability. Acetylation stimulates DNA-binding. Enhanced under stress conditions such as DNA damage and inhibited by retinoblastoma protein RB1. Regulated by KAP1/TRIM28 which recruits HDAC1 to E2F1 resulting in deacetylation. In terms of processing, methylation at Lys-183 by SETD7 promotes E2F1 ubiquitin-dependent proteasomal degradation.

It localises to the nucleus. BIRC2/c-IAP1 stimulates its transcriptional activity. Its function is as follows. Transcription activator that binds DNA cooperatively with DP proteins through the E2 recognition site, 5'-TTTC[CG]CGC-3' found in the promoter region of a number of genes whose products are involved in cell cycle regulation or in DNA replication. The DRTF1/E2F complex functions in the control of cell-cycle progression from G1 to S phase. E2F1 binds preferentially RB1 in a cell-cycle dependent manner. It can mediate both cell proliferation and TP53/p53-dependent apoptosis. Blocks adipocyte differentiation by binding to specific promoters repressing CEBPA binding to its target gene promoters. Directly activates transcription of PEG10. Positively regulates transcription of RRP1B. This chain is Transcription factor E2F1, found in Rattus norvegicus (Rat).